Reading from the N-terminus, the 277-residue chain is MLTKRALRTTDPYRRVLSRGFSVLNRPSPNYPGHVPLTTLERGALAVGSAIGSLINPRRADLIAALGEATATPYFIYRLRDVMLSDPTGRRILRNKPSINSKTLSVEYLRSLSPNTVGRTYVDWLDREGVGPDTRAKVQYIDDKECAYVMQRYRECHDFYHAITGLPVVAEGEIALKTFEFANTLLPMTGLSMFAVMRLKPEEKERFWKLHLPWAVRNGLASKAVINVYWEEQLERDVDELRKELGIEKPVDLREIRKIMRRQKKMAEEAAKTKKRY.

Residues 1-14 constitute a mitochondrion transit peptide; the sequence is MLTKRALRTTDPYR. Residues His-157, Asp-158, His-161, and Glu-173 each contribute to the Zn(2+) site.

It belongs to the COQ4 family. Component of a multi-subunit COQ enzyme complex, composed of at least COQ3, COQ4, COQ5, COQ6, COQ7 and COQ9. The cofactor is Zn(2+).

The protein localises to the mitochondrion inner membrane. The enzyme catalyses a 4-hydroxy-3-methoxy-5-(all-trans-polyprenyl)benzoate + H(+) = a 2-methoxy-6-(all-trans-polyprenyl)phenol + CO2. It functions in the pathway cofactor biosynthesis; ubiquinone biosynthesis. Lyase that catalyzes the C1-decarboxylation of 4-hydroxy-3-methoxy-5-(all-trans-polyprenyl)benzoic acid into 2-methoxy-6-(all-trans-polyprenyl)phenol during ubiquinone biosynthesis. This chain is Ubiquinone biosynthesis protein COQ4, mitochondrial, found in Ajellomyces capsulatus (strain NAm1 / WU24) (Darling's disease fungus).